The following is a 527-amino-acid chain: Bifunctional purine biosynthesis protein PurH (527 aa).

Residues 9 to 156 (MARKPIRRAL…KNHPSVAVVT (148 aa)) form the MGS-like domain.

The protein belongs to the PurH family.

It carries out the reaction (6R)-10-formyltetrahydrofolate + 5-amino-1-(5-phospho-beta-D-ribosyl)imidazole-4-carboxamide = 5-formamido-1-(5-phospho-D-ribosyl)imidazole-4-carboxamide + (6S)-5,6,7,8-tetrahydrofolate. The catalysed reaction is IMP + H2O = 5-formamido-1-(5-phospho-D-ribosyl)imidazole-4-carboxamide. It functions in the pathway purine metabolism; IMP biosynthesis via de novo pathway; 5-formamido-1-(5-phospho-D-ribosyl)imidazole-4-carboxamide from 5-amino-1-(5-phospho-D-ribosyl)imidazole-4-carboxamide (10-formyl THF route): step 1/1. It participates in purine metabolism; IMP biosynthesis via de novo pathway; IMP from 5-formamido-1-(5-phospho-D-ribosyl)imidazole-4-carboxamide: step 1/1. The sequence is that of Bifunctional purine biosynthesis protein PurH from Mycobacterium leprae (strain Br4923).